A 437-amino-acid polypeptide reads, in one-letter code: Acyl-coenzyme A thioesterase 2, chloroplastic (437 aa).

The transit peptide at 1–13 (MDLSSSPNHPITV) directs the protein to the chloroplast. 2 consecutive HotDog ACOT-type domains span residues 89 to 211 (ILYN…RDSK) and 287 to 404 (RDTR…RPEA).

The protein belongs to the acyl coenzyme A hydrolase family. As to expression, mostly expressed at low levels in glandular trichomes (lupulin glands), and, to a lower extent, in stems, leaves, flowers and cones.

It is found in the plastid. Its subcellular location is the chloroplast. Its function is as follows. Acyl-CoA thioesterases are a group of enzymes that catalyze the hydrolysis of acyl-CoAs to the free fatty acid and coenzyme A (CoASH), providing the potential to regulate intracellular levels of acyl-CoAs, free fatty acids and CoASH. The protein is Acyl-coenzyme A thioesterase 2, chloroplastic of Humulus lupulus (European hop).